Consider the following 274-residue polypeptide: Orotidine 5'-phosphate decarboxylase (274 aa).

Substrate is bound by residues Asp40, 62–64 (KTH), 93–102 (DRKFVDIGNT), Tyr227, and Arg245. The active-site Proton donor is Lys95.

This sequence belongs to the OMP decarboxylase family.

The enzyme catalyses orotidine 5'-phosphate + H(+) = UMP + CO2. The protein operates within pyrimidine metabolism; UMP biosynthesis via de novo pathway; UMP from orotate: step 2/2. This is Orotidine 5'-phosphate decarboxylase (URA3) from Coccidioides immitis (strain RS) (Valley fever fungus).